An 85-amino-acid chain; its full sequence is Putative septation protein SpoVG (85 aa).

This sequence belongs to the SpoVG family.

Its function is as follows. Could be involved in septation. This chain is Putative septation protein SpoVG, found in Archaeoglobus fulgidus (strain ATCC 49558 / DSM 4304 / JCM 9628 / NBRC 100126 / VC-16).